The following is a 274-amino-acid chain: Glutamate racemase (274 aa).

Residues 9–10 (DS) and 41–42 (YG) each bind substrate. Cysteine 73 functions as the Proton donor/acceptor in the catalytic mechanism. 74–75 (NT) is a substrate binding site. The active-site Proton donor/acceptor is cysteine 183. 184 to 185 (TH) contributes to the substrate binding site.

This sequence belongs to the aspartate/glutamate racemases family.

The enzyme catalyses L-glutamate = D-glutamate. Its pathway is cell wall biogenesis; peptidoglycan biosynthesis. Its function is as follows. Provides the (R)-glutamate required for cell wall biosynthesis. The sequence is that of Glutamate racemase from Shewanella baltica (strain OS185).